The sequence spans 251 residues: B3 domain-containing protein At2g24670 (251 aa).

The disordered stretch occupies residues 48 to 111; the sequence is TTPSTVMESK…SSKTREPTPG (64 aa). Residues 56 to 70 show a composition bias toward basic and acidic residues; that stretch reads SKSHIHDHSLRESPT. Residues 153-249 constitute a DNA-binding region (TF-B3); sequence VSQIVELEFL…TLYFALVPLY (97 aa).

Its subcellular location is the nucleus. This is B3 domain-containing protein At2g24670 from Arabidopsis thaliana (Mouse-ear cress).